Reading from the N-terminus, the 447-residue chain is Oxysterols receptor LXR-alpha (447 aa).

Residues 1 to 88 (MSLWLEAPVP…LRPQKRKKGP (88 aa)) form a disordered region. The tract at residues 1–96 (MSLWLEAPVP…GPAPKMLGNE (96 aa)) is transactivation AF-1; required for ligand-independent transactivation function. The segment at residues 95 to 170 (NELCSVCGDK…AGMREECVLS (76 aa)) is a DNA-binding region (nuclear receptor). 2 NR C4-type zinc fingers span residues 98-118 (CSVC…CEGC) and 134-158 (CHSG…LRKC). The segment at 178–203 (KMKRQEEEQAQATSAPPRASSPPQVL) is disordered. Positions 187-203 (AQATSAPPRASSPPQVL) are enriched in low complexity. Positions 205-447 (QLSPEQLGMI…LLSEIWDVHE (243 aa)) are transactivation AF-2; required for ligand-dependent transactivation function; mediates interaction with CCAR2. The region spanning 209–447 (EQLGMIEKLV…LLSEIWDVHE (239 aa)) is the NR LBD domain.

Belongs to the nuclear hormone receptor family. NR1 subfamily. As to quaternary structure, heterodimer of NR1H3 and RXR (retinoic acid receptor). Interacts with CCAR2 (via N-terminus) in a ligand-independent manner. Interacts with SIRT1 and this interaction is inhibited by CCAR2. Post-translationally, ubiquitinated by UBR5, leading to its degradation: UBR5 specifically recognizes and binds ligand-bound NR1H3 when it is not associated with coactivators (NCOAs). In presence of NCOAs, the UBR5-degron is not accessible, preventing its ubiquitination and degradation.

It localises to the nucleus. The protein resides in the cytoplasm. Its function is as follows. Nuclear receptor that exhibits a ligand-dependent transcriptional activation activity. Interaction with retinoic acid receptor (RXR) shifts RXR from its role as a silent DNA-binding partner to an active ligand-binding subunit in mediating retinoid responses through target genes defined by LXRES. LXRES are DR4-type response elements characterized by direct repeats of two similar hexanuclotide half-sites spaced by four nucleotides. Plays an important role in the regulation of cholesterol homeostasis, regulating cholesterol uptake through MYLIP-dependent ubiquitination of LDLR, VLDLR and LRP8. Interplays functionally with RORA for the regulation of genes involved in liver metabolism. Induces LPCAT3-dependent phospholipid remodeling in endoplasmic reticulum (ER) membranes of hepatocytes, driving SREBF1 processing and lipogenesis. Via LPCAT3, triggers the incorporation of arachidonate into phosphatidylcholines of ER membranes, increasing membrane dynamics and enabling triacylglycerols transfer to nascent very low-density lipoprotein (VLDL) particles. Via LPCAT3 also counteracts lipid-induced ER stress response and inflammation, likely by modulating SRC kinase membrane compartmentalization and limiting the synthesis of lipid inflammatory mediators. The polypeptide is Oxysterols receptor LXR-alpha (NR1H3) (Bos taurus (Bovine)).